The chain runs to 296 residues: MSDVVKTVIGQRLDLYKLLELNYKDYKGNDDAATTHSLKKQYRKLSLRYHPDKNPGPEYIDRFHLLNLAITVLADPAKKAEYDQWVAQYLYPDNGLSEAEQTRREALVQKLNASERKVREDNQGGNVADIGKIQNYGEKLRRMAHFGLGFGDWRNLDEHISRATTNTIEDSTTDKEVCTLRAVFDFQSIENISDPNNLRRYMNEVFPEYMYDIDEIRYSSNNVYDGEEDIVVYIVLKDPIKTGRLYHQIKRNPPDAFVEIEPYISPKLFESFSKEIPLNDHVKNLLRGVPEVIDLD.

Residues 14 to 86 (DLYKLLELNY…AKKAEYDQWV (73 aa)) form the J domain.

It belongs to the DnaJ family. Associated with the spliceosome.

The protein resides in the cytoplasm. It is found in the nucleus. In terms of biological role, involved in pre-mRNA splicing. May be involved in endoplasmic reticulum-associated protein degradation (ERAD) and required for growth at low and high temperatures. This is Pre-mRNA-splicing factor CWC23 (CWC23) from Candida glabrata (strain ATCC 2001 / BCRC 20586 / JCM 3761 / NBRC 0622 / NRRL Y-65 / CBS 138) (Yeast).